A 192-amino-acid polypeptide reads, in one-letter code: Putative integrase/recombinase y4gC (192 aa).

A Tyr recombinase domain is found at 1–183 (MPSILERDQI…ATEDLRAIAL (183 aa)). Active-site residues include arginine 41, lysine 66, histidine 135, arginine 138, and histidine 161. The active-site O-(3'-phospho-DNA)-tyrosine intermediate is the tyrosine 170.

Belongs to the 'phage' integrase family.

In Sinorhizobium fredii (strain NBRC 101917 / NGR234), this protein is Putative integrase/recombinase y4gC.